The sequence spans 429 residues: Adenylosuccinate synthetase (429 aa).

Residues 12–18 (GDEGKGK) and 40–42 (GHT) contribute to the GTP site. Aspartate 13 acts as the Proton acceptor in catalysis. Aspartate 13 and glycine 40 together coordinate Mg(2+). IMP contacts are provided by residues 13–16 (DEGK), 38–41 (NAGH), threonine 128, arginine 142, glutamine 223, threonine 238, and arginine 302. Histidine 41 (proton donor) is an active-site residue. 298–304 (TVTGRPR) serves as a coordination point for substrate. Residues arginine 304, 330–332 (LLD), and 412–414 (SVG) each bind GTP.

It belongs to the adenylosuccinate synthetase family. As to quaternary structure, homodimer. It depends on Mg(2+) as a cofactor.

Its subcellular location is the cytoplasm. The catalysed reaction is IMP + L-aspartate + GTP = N(6)-(1,2-dicarboxyethyl)-AMP + GDP + phosphate + 2 H(+). It participates in purine metabolism; AMP biosynthesis via de novo pathway; AMP from IMP: step 1/2. Its function is as follows. Plays an important role in the de novo pathway of purine nucleotide biosynthesis. Catalyzes the first committed step in the biosynthesis of AMP from IMP. The protein is Adenylosuccinate synthetase of Lactobacillus gasseri (strain ATCC 33323 / DSM 20243 / BCRC 14619 / CIP 102991 / JCM 1131 / KCTC 3163 / NCIMB 11718 / NCTC 13722 / AM63).